The chain runs to 408 residues: Multidrug resistance protein MdtG (408 aa).

11 helical membrane passes run 16 to 36 (LIVA…VMPF), 58 to 78 (IVFS…GGLA), 92 to 112 (LGMG…QFLI), 115 to 135 (ALLG…ATQV), 146 to 166 (TLST…GLLA), 173 to 193 (PVFF…LFCI), 224 to 244 (LFVT…ILTL), 256 to 276 (VAFI…LSAP), 290 to 310 (ILIT…YVQT), 319 to 339 (FLLG…LVYN), and 378 to 398 (AVFL…WNSL).

It belongs to the major facilitator superfamily. DHA1 family. MdtG (TC 2.A.1.2.20) subfamily.

Its subcellular location is the cell inner membrane. Functionally, confers resistance to fosfomycin and deoxycholate. In Escherichia coli (strain 55989 / EAEC), this protein is Multidrug resistance protein MdtG.